Consider the following 716-residue polypeptide: Epidermal growth factor receptor kinase substrate 8-like protein 1 (716 aa).

One can recognise a PTB domain in the interval 35 to 164; sequence QYHVNHLVTF…LQNYRSGRGE (130 aa). Disordered stretches follow at residues 175 to 194, 203 to 249, 404 to 472, 528 to 582, and 600 to 628; these read EELR…QRRP, VEPS…GPEL, PGVE…ETES, YNIL…SLDP, and SRLA…PRSE. Ser182 is subject to Phosphoserine. Position 187 is a phosphothreonine (Thr187). Basic and acidic residues predominate over residues 435 to 446; that stretch reads PWEDPVEKQLQH. Positions 453–464 are enriched in polar residues; the sequence is QSAPQVAVNGQQ. Residues 477–536 form the SH3 domain; the sequence is KARKWVLCNYDFQARNGSELSVKHRDVLEVLDDRRKWWKVRDHQGQEGYVPYNILTPHPG. A compositionally biased stretch (pro residues) spans 553 to 563; that stretch reads TPPPPPAPAPA. Positions 682 to 713 form a coiled coil; that stretch reads VQRALLEDREKVSELEAVMEKQKKKVEGETKT.

The protein belongs to the EPS8 family. In terms of assembly, interacts with ABI1. Part of a complex that contains SOS1, ABI1 and EPS8L2. Associates with F-actin. In terms of tissue distribution, detected in placenta, skin, mammary gland, bone marrow and stomach.

The protein localises to the cytoplasm. In terms of biological role, stimulates guanine exchange activity of SOS1. May play a role in membrane ruffling and remodeling of the actin cytoskeleton. The polypeptide is Epidermal growth factor receptor kinase substrate 8-like protein 1 (Eps8l1) (Mus musculus (Mouse)).